We begin with the raw amino-acid sequence, 104 residues long: Large ribosomal subunit protein uL24 (104 aa).

Belongs to the universal ribosomal protein uL24 family. As to quaternary structure, part of the 50S ribosomal subunit.

Its function is as follows. One of two assembly initiator proteins, it binds directly to the 5'-end of the 23S rRNA, where it nucleates assembly of the 50S subunit. In terms of biological role, one of the proteins that surrounds the polypeptide exit tunnel on the outside of the subunit. This chain is Large ribosomal subunit protein uL24, found in Baumannia cicadellinicola subsp. Homalodisca coagulata.